Here is an 868-residue protein sequence, read N- to C-terminus: Alanine--tRNA ligase (868 aa).

His-556, His-560, Cys-666, and His-670 together coordinate Zn(2+).

The protein belongs to the class-II aminoacyl-tRNA synthetase family. Requires Zn(2+) as cofactor.

Its subcellular location is the cytoplasm. The catalysed reaction is tRNA(Ala) + L-alanine + ATP = L-alanyl-tRNA(Ala) + AMP + diphosphate. In terms of biological role, catalyzes the attachment of alanine to tRNA(Ala) in a two-step reaction: alanine is first activated by ATP to form Ala-AMP and then transferred to the acceptor end of tRNA(Ala). Also edits incorrectly charged Ser-tRNA(Ala) and Gly-tRNA(Ala) via its editing domain. The sequence is that of Alanine--tRNA ligase from Elusimicrobium minutum (strain Pei191).